Reading from the N-terminus, the 41-residue chain is Photosystem I reaction center subunit IX (41 aa).

Residues 7–27 (YLSTAPVIALAWMSFTAGLLI) traverse the membrane as a helical segment.

Belongs to the PsaJ family.

The protein localises to the plastid. Its subcellular location is the chloroplast thylakoid membrane. Its function is as follows. May help in the organization of the PsaE and PsaF subunits. The sequence is that of Photosystem I reaction center subunit IX from Tupiella akineta (Green alga).